Reading from the N-terminus, the 421-residue chain is Isocitrate dehydrogenase [NADP], mitochondrial (421 aa).

A mitochondrion-targeting transit peptide spans 1–8 (ARAAARHY). Lys14, Lys17, Lys36, and Lys38 each carry N6-acetyllysine. N6-acetyllysine; alternate occurs at positions 49 and 75. N6-succinyllysine; alternate occurs at positions 49 and 75. Residues 84–86 (TIT) and Arg91 each bind NADP(+). Thr86 contacts D-threo-isocitrate. D-threo-isocitrate-binding positions include 103–109 (SPNGTIR) and Arg118. Position 124 is an N6-acetyllysine (Lys124). Lys135 bears the N6-acetyllysine; alternate mark. The residue at position 135 (Lys135) is an N6-succinyllysine; alternate. Arg141 serves as a coordination point for D-threo-isocitrate. Residues Lys149 and Lys162 each carry the N6-acetyllysine; alternate modification. An N6-succinyllysine; alternate mark is found at Lys149 and Lys162. N6-acetyllysine is present on Lys168. Lys225 is subject to N6-acetyllysine; alternate. Lys225 carries the post-translational modification N6-succinyllysine; alternate. Lys232, Lys241, Lys244, and Lys249 each carry N6-acetyllysine. The residue at position 251 (Lys251) is an N6-acetyllysine; alternate. The residue at position 251 (Lys251) is an N6-succinyllysine; alternate. Asp260 contacts Mn(2+). Lys268 is an NADP(+) binding site. Asp283 provides a ligand contact to Mn(2+). NADP(+) is bound by residues 318–323 (GTVTRH) and Asn336. Lys353 carries the N6-acetyllysine; alternate modification. Position 353 is an N6-succinyllysine; alternate (Lys353). N6-acetyllysine occurs at positions 369, 382, and 411.

Belongs to the isocitrate and isopropylmalate dehydrogenases family. As to quaternary structure, homodimer. The cofactor is Mg(2+). Mn(2+) serves as cofactor. In terms of processing, acetylation at Lys-382 dramatically reduces catalytic activity. Deacetylated by SIRT3.

Its subcellular location is the mitochondrion. The enzyme catalyses D-threo-isocitrate + NADP(+) = 2-oxoglutarate + CO2 + NADPH. In terms of biological role, plays a role in intermediary metabolism and energy production. It may tightly associate or interact with the pyruvate dehydrogenase complex. The chain is Isocitrate dehydrogenase [NADP], mitochondrial (IDH2) from Sus scrofa (Pig).